The chain runs to 230 residues: Cytidylate kinase (230 aa).

12–20 contacts ATP; the sequence is GPSGAGKST.

Belongs to the cytidylate kinase family. Type 1 subfamily.

Its subcellular location is the cytoplasm. The enzyme catalyses CMP + ATP = CDP + ADP. It carries out the reaction dCMP + ATP = dCDP + ADP. In Corynebacterium diphtheriae (strain ATCC 700971 / NCTC 13129 / Biotype gravis), this protein is Cytidylate kinase.